Reading from the N-terminus, the 95-residue chain is Envelope glycoprotein N (95 aa).

Residues 1-26 (MGLMDIHNAVCSLVIGVAILIATSQA) form the signal peptide. At 27 to 55 (TFVDWGSSITSMGDFWESTCSAVGVSIAF) the chain is on the virion surface side. The chain crosses the membrane as a helical span at residues 56–76 (SSGFSVLFYMGLVAVISALLA). Residues 77–95 (GSYHACFRLFTADMFKEEW) are Intravirion-facing.

The protein belongs to the herpesviridae glycoprotein N family. In terms of assembly, interacts (via N-terminus) with gM (via N-terminus). The gM-gN heterodimer forms the gCII complex.

The protein localises to the virion membrane. It localises to the host membrane. Its subcellular location is the host Golgi apparatus. The protein resides in the host trans-Golgi network. Envelope glycoprotein necessary for proper maturation of gM and modulation of its membrane fusion activity. Also plays a critical role in virion morphogenesis. This chain is Envelope glycoprotein N, found in Gallus gallus (Chicken).